Here is a 270-residue protein sequence, read N- to C-terminus: Chymotrypsin-like elastase family member 3B (270 aa).

Positions 1 to 15 (MMLRLLSSLLLVAVA) form a signal peptide, or 16. Residues 16–28 (SGYGPPSSRPSSR) constitute a propeptide, activation peptide. One can recognise a Peptidase S1 domain in the interval 29–268 (VVNGEDAVPY…FIDWIEETIA (240 aa)). The cysteines at positions 58 and 74 are disulfide-linked. His-73 serves as the catalytic Charge relay system. Asn-114 is a glycosylation site (N-linked (GlcNAc...) asparagine). Cys-117 and Cys-120 are disulfide-bonded. Catalysis depends on Asp-123, which acts as the Charge relay system. Disulfide bonds link Cys-157/Cys-223, Cys-188/Cys-204, and Cys-213/Cys-244. The Charge relay system role is filled by Ser-217.

The protein belongs to the peptidase S1 family. Elastase subfamily. In terms of tissue distribution, pancreas. Not detectable in keratinocytes.

It carries out the reaction Preferential cleavage: Ala-|-Xaa. Does not hydrolyze elastin.. In terms of biological role, efficient protease with alanine specificity but only little elastolytic activity. The sequence is that of Chymotrypsin-like elastase family member 3B (CELA3B) from Homo sapiens (Human).